Consider the following 274-residue polypeptide: Large ribosomal subunit protein uL2cz/uL2cy (274 aa).

A disordered region spans residues 225 to 274 (NPVDHPHGGGEGRAPIGRKKPTTPWGYPALGRRSRKRKKYSDSFILRRRK).

It belongs to the universal ribosomal protein uL2 family. As to quaternary structure, part of the 50S ribosomal subunit.

The protein resides in the plastid. Its subcellular location is the chloroplast. This Dioscorea elephantipes (Elephant's foot yam) protein is Large ribosomal subunit protein uL2cz/uL2cy (rpl2-A).